The primary structure comprises 493 residues: Galactose-1-phosphate uridylyltransferase (493 aa).

It belongs to the galactose-1-phosphate uridylyltransferase type 2 family.

It is found in the cytoplasm. The catalysed reaction is alpha-D-galactose 1-phosphate + UDP-alpha-D-glucose = alpha-D-glucose 1-phosphate + UDP-alpha-D-galactose. Its pathway is carbohydrate metabolism; galactose metabolism. The sequence is that of Galactose-1-phosphate uridylyltransferase from Streptococcus thermophilus (strain CNRZ 1066).